The following is a 335-amino-acid chain: 4-hydroxythreonine-4-phosphate dehydrogenase (335 aa).

Positions 135 and 136 each coordinate substrate. A divalent metal cation-binding residues include His-165, His-210, and His-265. Lys-273, Asn-282, and Arg-291 together coordinate substrate.

It belongs to the PdxA family. As to quaternary structure, homodimer. Zn(2+) is required as a cofactor. Requires Mg(2+) as cofactor. Co(2+) serves as cofactor.

Its subcellular location is the cytoplasm. The catalysed reaction is 4-(phosphooxy)-L-threonine + NAD(+) = 3-amino-2-oxopropyl phosphate + CO2 + NADH. The protein operates within cofactor biosynthesis; pyridoxine 5'-phosphate biosynthesis; pyridoxine 5'-phosphate from D-erythrose 4-phosphate: step 4/5. Functionally, catalyzes the NAD(P)-dependent oxidation of 4-(phosphooxy)-L-threonine (HTP) into 2-amino-3-oxo-4-(phosphooxy)butyric acid which spontaneously decarboxylates to form 3-amino-2-oxopropyl phosphate (AHAP). This is 4-hydroxythreonine-4-phosphate dehydrogenase from Saccharophagus degradans (strain 2-40 / ATCC 43961 / DSM 17024).